The primary structure comprises 190 residues: dCTP deaminase (190 aa).

Residue 113–118 coordinates dCTP; the sequence is KSTYAR. Glu-139 (proton donor/acceptor) is an active-site residue. DCTP is bound by residues Gln-158, Tyr-172, Lys-181, and Gln-182.

Belongs to the dCTP deaminase family. As to quaternary structure, homotrimer.

It carries out the reaction dCTP + H2O + H(+) = dUTP + NH4(+). It functions in the pathway pyrimidine metabolism; dUMP biosynthesis; dUMP from dCTP (dUTP route): step 1/2. In terms of biological role, catalyzes the deamination of dCTP to dUTP. The polypeptide is dCTP deaminase (Chlamydia caviae (strain ATCC VR-813 / DSM 19441 / 03DC25 / GPIC) (Chlamydophila caviae)).